The chain runs to 967 residues: Serine/threonine-protein kinase 10 (967 aa).

Ser-13 and Ser-20 each carry phosphoserine. Positions 36–294 (WEILGELGDG…AAQLLQHPFV (259 aa)) constitute a Protein kinase domain. ATP-binding positions include 42–50 (LGDGAFGKV) and Lys-65. The active-site Proton acceptor is the Asp-157. The tract at residues 175 to 224 (DFGVSAKNLKTLQKRDSFIGTPYWMAPEVVLCETMKDAPYDYKADIWSLG) is activation segment. Phosphothreonine; by autocatalysis is present on Thr-185. Phosphoserine; by autocatalysis is present on Ser-191. Disordered regions lie at residues 317–454 (EIED…RPNS) and 468–498 (GGLE…SMDY). 3 stretches are compositionally biased toward polar residues: residues 339–364 (NHTQ…DSST), 378–393 (PCNQ…NTSP), and 431–454 (TDQA…RPNS). 4 positions are modified to phosphoserine: Ser-438, Ser-450, Ser-454, and Ser-485. A compositionally biased stretch (polar residues) spans 486-498 (DCSNLSTSESMDY). 2 positions are modified to phosphoserine: Ser-514 and Ser-549. 2 disordered regions span residues 827–866 (INGA…ENQM) and 902–967 (LDES…GDAS). Basic and acidic residues-rich tracts occupy residues 835–866 (EQRE…ENQM) and 902–947 (LDES…EAET). Phosphothreonine is present on Thr-951.

The protein belongs to the protein kinase superfamily. STE Ser/Thr protein kinase family. STE20 subfamily. Homodimer; homodimerization is required for activation segment autophosphorylation. Post-translationally, autophosphorylates following homodimerization, leading to activation of the protein.

It localises to the cell membrane. The catalysed reaction is L-seryl-[protein] + ATP = O-phospho-L-seryl-[protein] + ADP + H(+). It carries out the reaction L-threonyl-[protein] + ATP = O-phospho-L-threonyl-[protein] + ADP + H(+). Inhibited by the pyrrole-indolinone inhibitor SU11274 (K00593): intercalates between the ATP-binding Lys-65 and alpha-C glutamate (Glu-81), resulting in a partial disordering of the lysine side chain. Also specifically inhibited by erlotinib. Slightly inhibited by gefitinib. Functionally, serine/threonine-protein kinase involved in regulation of lymphocyte migration. Phosphorylates MSN, and possibly PLK1. Involved in regulation of lymphocyte migration by mediating phosphorylation of ERM proteins such as MSN. Acts as a negative regulator of MAP3K1/MEKK1. May also act as a cell cycle regulator by acting as a polo kinase kinase: mediates phosphorylation of PLK1 in vitro; however such data require additional evidences in vivo. In Rattus norvegicus (Rat), this protein is Serine/threonine-protein kinase 10 (Stk10).